Here is a 418-residue protein sequence, read N- to C-terminus: Glutamyl-tRNA(Gln) amidotransferase subunit D (418 aa).

The Asparaginase/glutaminase domain occupies 81 to 407; sequence PDVKIISTGG…EEAKEMVKKS (327 aa). Catalysis depends on residues Thr-91, Thr-166, Asp-167, and Lys-243.

This sequence belongs to the asparaginase 1 family. GatD subfamily. Heterodimer of GatD and GatE.

The catalysed reaction is L-glutamyl-tRNA(Gln) + L-glutamine + ATP + H2O = L-glutaminyl-tRNA(Gln) + L-glutamate + ADP + phosphate + H(+). Its function is as follows. Allows the formation of correctly charged Gln-tRNA(Gln) through the transamidation of misacylated Glu-tRNA(Gln) in organisms which lack glutaminyl-tRNA synthetase. The reaction takes place in the presence of glutamine and ATP through an activated gamma-phospho-Glu-tRNA(Gln). The GatDE system is specific for glutamate and does not act on aspartate. This Archaeoglobus fulgidus (strain ATCC 49558 / DSM 4304 / JCM 9628 / NBRC 100126 / VC-16) protein is Glutamyl-tRNA(Gln) amidotransferase subunit D.